The chain runs to 44 residues: uncharacterized protein (44 aa).

This is an uncharacterized protein from His1 virus (isolate Australia/Victoria) (His1V).